The primary structure comprises 251 residues: Hydroxyacylglutathione hydrolase (251 aa).

Zn(2+) contacts are provided by His-53, His-55, Asp-57, His-58, His-110, Asp-127, and His-165.

This sequence belongs to the metallo-beta-lactamase superfamily. Glyoxalase II family. In terms of assembly, monomer. It depends on Zn(2+) as a cofactor.

The catalysed reaction is an S-(2-hydroxyacyl)glutathione + H2O = a 2-hydroxy carboxylate + glutathione + H(+). It participates in secondary metabolite metabolism; methylglyoxal degradation; (R)-lactate from methylglyoxal: step 2/2. In terms of biological role, thiolesterase that catalyzes the hydrolysis of S-D-lactoyl-glutathione to form glutathione and D-lactic acid. The chain is Hydroxyacylglutathione hydrolase from Yersinia pseudotuberculosis serotype IB (strain PB1/+).